The sequence spans 322 residues: Ras association domain-containing protein 4 (322 aa).

The interval 96-161 (EASPQDSKVP…SKSRAPSEAQ (66 aa)) is disordered. Serine 142 is modified (phosphoserine). The Ras-associating domain maps to 175–264 (YNHKTSVFTP…KIFLMEADLS (90 aa)). One can recognise an SARAH domain in the interval 271–318 (VAQYIKFEMPVLDSFVEKLKEEEEREIIKLTMKFQALRLTMLQRLEQL).

In terms of assembly, interacts directly with activated KRAS in a GTP-dependent manner.

Functionally, potential tumor suppressor. May act as a KRAS effector protein. May promote apoptosis and cell cycle arrest. The protein is Ras association domain-containing protein 4 (Rassf4) of Mus musculus (Mouse).